Here is a 317-residue protein sequence, read N- to C-terminus: Lipoyl synthase (317 aa).

Positions 56, 61, 67, 82, 86, 89, and 298 each coordinate [4Fe-4S] cluster. The Radical SAM core domain maps to 68–287 (WEDREATFLI…KEEAEQIGFS (220 aa)).

Belongs to the radical SAM superfamily. Lipoyl synthase family. It depends on [4Fe-4S] cluster as a cofactor.

The protein resides in the cytoplasm. It catalyses the reaction [[Fe-S] cluster scaffold protein carrying a second [4Fe-4S](2+) cluster] + N(6)-octanoyl-L-lysyl-[protein] + 2 oxidized [2Fe-2S]-[ferredoxin] + 2 S-adenosyl-L-methionine + 4 H(+) = [[Fe-S] cluster scaffold protein] + N(6)-[(R)-dihydrolipoyl]-L-lysyl-[protein] + 4 Fe(3+) + 2 hydrogen sulfide + 2 5'-deoxyadenosine + 2 L-methionine + 2 reduced [2Fe-2S]-[ferredoxin]. Its pathway is protein modification; protein lipoylation via endogenous pathway; protein N(6)-(lipoyl)lysine from octanoyl-[acyl-carrier-protein]: step 2/2. In terms of biological role, catalyzes the radical-mediated insertion of two sulfur atoms into the C-6 and C-8 positions of the octanoyl moiety bound to the lipoyl domains of lipoate-dependent enzymes, thereby converting the octanoylated domains into lipoylated derivatives. The protein is Lipoyl synthase of Streptomyces coelicolor (strain ATCC BAA-471 / A3(2) / M145).